The sequence spans 289 residues: MYG1 protein CT_386 (289 aa).

Belongs to the MYG1 family.

The chain is MYG1 protein CT_386 from Chlamydia trachomatis serovar D (strain ATCC VR-885 / DSM 19411 / UW-3/Cx).